A 1107-amino-acid chain; its full sequence is OTU domain-containing protein 4 (1107 aa).

Met1 is modified (N-acetylmethionine). The OTU domain occupies 34-155; that stretch reads LYRKLVAKDG…GNHYDIVYPI (122 aa). The cys-loop stretch occupies residues 39-45; the sequence is VAKDGSC. Asp42 is an active-site residue. Cys45 serves as the catalytic Nucleophile. Residues 94–104 are variable-loop; it reads LENPQEWVGQV. Tyr120 is subject to Phosphotyrosine. Residues Ser126 and Ser128 each carry the phosphoserine modification. At Thr131 the chain carries Phosphothreonine. Residues 143-148 form a his-loop region; the sequence is FSNGNH. Residue His148 is part of the active site. Phosphoserine occurs at positions 166, 199, 202, and 204. Residues 195–206 are compositionally biased toward acidic residues; that stretch reads EESNSEISDSED. Disordered regions lie at residues 195–239 and 322–431; these read EESN…SADL and KHTP…DFDH. Residues 226–236 show a composition bias toward polar residues; the sequence is GSENPKNNGNS. Position 340 is a phosphoserine (Ser340). The span at 392–403 shows a compositional bias: low complexity; that stretch reads SSHSTGSQSQKS. Residues 419-431 are compositionally biased toward basic and acidic residues; it reads RKPDRERAEDFDH. The residue at position 438 (Tyr438) is a Phosphotyrosine. Ser442 is subject to Phosphoserine. Tyr459 bears the Phosphotyrosine mark. Positions 470-568 are disordered; the sequence is PALSSSSVSQ…KPAEHIPLSN (99 aa). Positions 473 to 486 are enriched in low complexity; it reads SSSSVSQSPSQNSN. Positions 495 to 528 are enriched in basic and acidic residues; it reads HARDRKGSMRRADAEERKDKDSLRGHTHVDKKPE. Ser544 and Ser895 each carry phosphoserine. The interval 918–1107 is disordered; that stretch reads LSAASVSSKH…MGDGHRGQHT (190 aa). Over residues 963-994 the composition is skewed to basic and acidic residues; the sequence is NREREPGSAEPEPKRTIQSLKEKPEKVKDPKT. Phosphoserine occurs at positions 1000, 1005, 1016, and 1017. A compositionally biased stretch (polar residues) spans 1032-1041; it reads SKQFYNQTYG. A Phosphoserine modification is found at Ser1042. Composition is skewed to basic and acidic residues over residues 1060–1079 and 1089–1107; these read VRGE…EGYQ and YRGD…GQHT.

As to quaternary structure, interacts with MYD88; the interaction is direct. Interacts with ALKBH3; the interaction is direct. Interacts with USP7; the interaction is direct. Interacts with USP9X; the interaction is direct. Phosphorylation at Ser-202 and Ser-204 activates 'Lys-63'-specific deubiquitinase activity. Induced upon stimulation with IL1B.

It localises to the cytoplasm. It is found in the nucleus. The catalysed reaction is Thiol-dependent hydrolysis of ester, thioester, amide, peptide and isopeptide bonds formed by the C-terminal Gly of ubiquitin (a 76-residue protein attached to proteins as an intracellular targeting signal).. Its activity is regulated as follows. Phosphorylation on Ser-202 and Ser-204 induces 'Lys-63'-specific deubiquitinase activity. Deubiquitinase which hydrolyzes the isopeptide bond between the ubiquitin C-terminus and the lysine epsilon-amino group of the target protein. May negatively regulate inflammatory and pathogen recognition signaling in innate immune response. Upon phosphorylation at Ser-202 and Ser-204 residues, via IL-1 receptor and Toll-like receptor signaling pathway, specifically deubiquitinates 'Lys-63'-polyubiquitinated MYD88 adapter protein triggering down-regulation of NF-kappa-B-dependent transcription of inflammatory mediators. Independently of the catalytic activity, acts as a scaffold for alternative deubiquitinases to assemble specific deubiquitinase-substrate complexes. Associates with USP7 and USP9X deubiquitinases to stabilize alkylation repair enzyme ALKBH3, thereby promoting the repair of alkylated DNA lesions. In Mus musculus (Mouse), this protein is OTU domain-containing protein 4.